The following is a 292-amino-acid chain: Probable 2-(5''-triphosphoribosyl)-3'-dephosphocoenzyme-A synthase (292 aa).

Belongs to the CitG/MdcB family.

It catalyses the reaction 3'-dephospho-CoA + ATP = 2'-(5''-triphospho-alpha-D-ribosyl)-3'-dephospho-CoA + adenine. This Shigella flexneri serotype 5b (strain 8401) protein is Probable 2-(5''-triphosphoribosyl)-3'-dephosphocoenzyme-A synthase.